Consider the following 274-residue polypeptide: ATP synthase subunit a (274 aa).

5 helical membrane-spanning segments follow: residues 40–60, 110–130, 149–169, 224–244, and 245–265; these read FWVC…VILI, IFVW…LVPF, DVNI…FYSI, IFIL…SVPW, and AIFH…LTIV.

This sequence belongs to the ATPase A chain family. In terms of assembly, F-type ATPases have 2 components, CF(1) - the catalytic core - and CF(0) - the membrane proton channel. CF(1) has five subunits: alpha(3), beta(3), gamma(1), delta(1), epsilon(1). CF(0) has three main subunits: a(1), b(2) and c(9-12). The alpha and beta chains form an alternating ring which encloses part of the gamma chain. CF(1) is attached to CF(0) by a central stalk formed by the gamma and epsilon chains, while a peripheral stalk is formed by the delta and b chains.

It is found in the cell membrane. Functionally, key component of the proton channel; it plays a direct role in the translocation of protons across the membrane. This chain is ATP synthase subunit a, found in Buchnera aphidicola subsp. Baizongia pistaciae (strain Bp).